The primary structure comprises 381 residues: Homoserine O-succinyltransferase (381 aa).

The AB hydrolase-1 domain maps to 45-360; it reads NAVLVCHALN…PHGHDAFLLD (316 aa). The active-site Nucleophile is serine 151. A substrate-binding site is contributed by arginine 221. Residues aspartate 321 and histidine 354 contribute to the active site. Aspartate 355 contacts substrate.

The protein belongs to the AB hydrolase superfamily. MetX family. Homodimer.

Its subcellular location is the cytoplasm. The enzyme catalyses L-homoserine + succinyl-CoA = O-succinyl-L-homoserine + CoA. It functions in the pathway amino-acid biosynthesis; L-methionine biosynthesis via de novo pathway; O-succinyl-L-homoserine from L-homoserine: step 1/1. Transfers a succinyl group from succinyl-CoA to L-homoserine, forming succinyl-L-homoserine. The sequence is that of Homoserine O-succinyltransferase from Burkholderia ambifaria (strain MC40-6).